We begin with the raw amino-acid sequence, 134 residues long: ATP synthase epsilon chain (134 aa).

The protein belongs to the ATPase epsilon chain family. As to quaternary structure, F-type ATPases have 2 components, CF(1) - the catalytic core - and CF(0) - the membrane proton channel. CF(1) has five subunits: alpha(3), beta(3), gamma(1), delta(1), epsilon(1). CF(0) has three main subunits: a, b and c.

The protein localises to the cell membrane. Functionally, produces ATP from ADP in the presence of a proton gradient across the membrane. This chain is ATP synthase epsilon chain, found in Anoxybacillus flavithermus (strain DSM 21510 / WK1).